A 337-amino-acid chain; its full sequence is Glyceraldehyde-3-phosphate dehydrogenase 1 (337 aa).

NAD(+) is bound by residues 12 to 13, D34, and M79; that span reads RI. D-glyceraldehyde 3-phosphate-binding positions include 151–153, T182, 211–212, and R234; these read SCT and TG. C152 functions as the Nucleophile in the catalytic mechanism. An NAD(+)-binding site is contributed by N316.

Belongs to the glyceraldehyde-3-phosphate dehydrogenase family. In terms of assembly, homotetramer.

The protein resides in the cytoplasm. It catalyses the reaction D-glyceraldehyde 3-phosphate + phosphate + NAD(+) = (2R)-3-phospho-glyceroyl phosphate + NADH + H(+). Its pathway is carbohydrate degradation; glycolysis; pyruvate from D-glyceraldehyde 3-phosphate: step 1/5. The chain is Glyceraldehyde-3-phosphate dehydrogenase 1 (GAP1) from Giardia intestinalis (Giardia lamblia).